Here is a 307-residue protein sequence, read N- to C-terminus: Ninja-family protein 5 (307 aa).

Disordered stretches follow at residues 1 to 159 (MASR…EHTV) and 173 to 208 (TAGS…EPQP). The span at 8-30 (GGFGRDGGQAPVGGAGAAPGPGG) shows a compositional bias: gly residues. 2 stretches are compositionally biased toward polar residues: residues 63-83 (QRSS…GTSC) and 173-183 (TAGSPTPSRPQ).

It belongs to the Ninja family.

The protein localises to the nucleus. The chain is Ninja-family protein 5 from Zea mays (Maize).